Consider the following 491-residue polypeptide: Stromelysin-3 (491 aa).

A signal peptide spans 1 to 35; sequence MARAACLLRAISRALLLPLPLLLLLLLLLPPQLMA. Residues 36-101 constitute a propeptide, activation peptide; it reads RARPPENHRH…VLNARNRQKR (66 aa). The Cysteine switch signature appears at 82-89; sequence LRCGVPDP. Residues C84, H168, and D170 each contribute to the Zn(2+) site. Ca(2+) is bound by residues D175, G176, G178, and I180. Residues H183, H196, and H218 each contribute to the Zn(2+) site. Residue E219 is part of the active site. 2 residues coordinate Zn(2+): H222 and H228. The segment at 260–279 is disordered; it reads YGRPQLTPTSPTPTLSSQAG. Over residues 263–277 the composition is skewed to low complexity; sequence PQLTPTSPTPTLSSQ. C297 and C483 form a disulfide bridge. Hemopexin repeat units follow at residues 298–342, 343–385, 387–435, and 436–483; these read ETSF…WQGL, PSPV…KLGL, GSPV…WRGV, and PSEI…FFDC.

The protein belongs to the peptidase M10A family. Ca(2+) serves as cofactor. Zn(2+) is required as a cofactor. In terms of processing, the precursor is cleaved by a furin endopeptidase. As to expression, highly expressed in ovary and uterus.

The protein resides in the secreted. Its subcellular location is the extracellular space. It is found in the extracellular matrix. Its function is as follows. May play an important role in the progression of epithelial malignancies. The protein is Stromelysin-3 (Mmp11) of Rattus norvegicus (Rat).